Here is a 338-residue protein sequence, read N- to C-terminus: Ketol-acid reductoisomerase (NADP(+)) (338 aa).

Residues Met-1–Thr-181 form the KARI N-terminal Rossmann domain. NADP(+) contacts are provided by residues Tyr-24–Gln-27, Arg-47, Ser-52, and Asp-82–Gln-85. His-107 is a catalytic residue. Gly-133 is an NADP(+) binding site. Positions Ser-182–Ile-327 constitute a KARI C-terminal knotted domain. Residues Asp-190, Glu-194, Glu-226, and Glu-230 each contribute to the Mg(2+) site. Ser-251 is a substrate binding site.

Belongs to the ketol-acid reductoisomerase family. Mg(2+) serves as cofactor.

It catalyses the reaction (2R)-2,3-dihydroxy-3-methylbutanoate + NADP(+) = (2S)-2-acetolactate + NADPH + H(+). It carries out the reaction (2R,3R)-2,3-dihydroxy-3-methylpentanoate + NADP(+) = (S)-2-ethyl-2-hydroxy-3-oxobutanoate + NADPH + H(+). Its pathway is amino-acid biosynthesis; L-isoleucine biosynthesis; L-isoleucine from 2-oxobutanoate: step 2/4. It functions in the pathway amino-acid biosynthesis; L-valine biosynthesis; L-valine from pyruvate: step 2/4. In terms of biological role, involved in the biosynthesis of branched-chain amino acids (BCAA). Catalyzes an alkyl-migration followed by a ketol-acid reduction of (S)-2-acetolactate (S2AL) to yield (R)-2,3-dihydroxy-isovalerate. In the isomerase reaction, S2AL is rearranged via a Mg-dependent methyl migration to produce 3-hydroxy-3-methyl-2-ketobutyrate (HMKB). In the reductase reaction, this 2-ketoacid undergoes a metal-dependent reduction by NADPH to yield (R)-2,3-dihydroxy-isovalerate. This Laribacter hongkongensis (strain HLHK9) protein is Ketol-acid reductoisomerase (NADP(+)).